A 353-amino-acid polypeptide reads, in one-letter code: Glutamine synthetase cytosolic isozyme 1-5 (353 aa).

N-acetylthreonine is present on Thr2. Residue Ser3 is modified to Phosphoserine. Residues 19-99 form the GS beta-grasp domain; it reads IIAEYIWIGG…VMCDAYRPAG (81 aa). The 248-residue stretch at 106 to 353 folds into the GS catalytic domain; the sequence is NRHKAVKIFD…TSMIAETTIL (248 aa).

This sequence belongs to the glutamine synthetase family. As to quaternary structure, homooctamer. In terms of tissue distribution, not expressed in roots.

It localises to the cytoplasm. It catalyses the reaction L-glutamate + NH4(+) + ATP = L-glutamine + ADP + phosphate + H(+). This chain is Glutamine synthetase cytosolic isozyme 1-5 (GLN1-5), found in Arabidopsis thaliana (Mouse-ear cress).